The sequence spans 240 residues: Keratinocyte-associated protein 3 (240 aa).

Helical transmembrane passes span 21 to 41, 63 to 83, 95 to 115, and 163 to 183; these read VGLALILVGHVNLLVGAVLHG, VISVGSGLLSVSVGLVALLAS, LLTLALVNLLLSAACSMGLLL, and ALALWIPSLFMSAAEAALSGY.

This sequence belongs to the TMEM54 family.

The protein localises to the membrane. This Mus musculus (Mouse) protein is Keratinocyte-associated protein 3 (Krtcap3).